The following is a 470-amino-acid chain: Cysteine--tRNA ligase (470 aa).

Cysteine 27 contacts Zn(2+). The 'HIGH' region signature appears at 29–39; it reads PTVYNYIHIGN. Zn(2+)-binding residues include cysteine 207, histidine 232, and glutamate 236. The short motif at 264 to 268 is the 'KMSKS' region element; it reads KMSKS. Position 267 (lysine 267) interacts with ATP.

The protein belongs to the class-I aminoacyl-tRNA synthetase family. As to quaternary structure, monomer. The cofactor is Zn(2+).

The protein localises to the cytoplasm. It catalyses the reaction tRNA(Cys) + L-cysteine + ATP = L-cysteinyl-tRNA(Cys) + AMP + diphosphate. This Lachnoclostridium phytofermentans (strain ATCC 700394 / DSM 18823 / ISDg) (Clostridium phytofermentans) protein is Cysteine--tRNA ligase.